We begin with the raw amino-acid sequence, 283 residues long: uncharacterized protein (283 aa).

Residues 1–21 (MSAYTHPMERELSGLSSRGNS) form a disordered region. A helical transmembrane segment spans residues 41 to 61 (SIFIASLVTFGVLMITLLIAL).

It belongs to the APS1/VSP family.

It localises to the membrane. This is an uncharacterized protein from Arabidopsis thaliana (Mouse-ear cress).